A 126-amino-acid chain; its full sequence is Large ribosomal subunit protein uL14m (126 aa).

The protein belongs to the universal ribosomal protein uL14 family. As to quaternary structure, component of the mitochondrial large ribosomal subunit (mt-LSU). Mature yeast 74S mitochondrial ribosomes consist of a small (37S) and a large (54S) subunit. The 37S small subunit contains a 15S ribosomal RNA (15S mt-rRNA) and at least 32 different proteins. The 54S large subunit contains a 21S rRNA (21S mt-rRNA) and at least 45 different proteins.

Its subcellular location is the mitochondrion. Functionally, component of the mitochondrial ribosome (mitoribosome), a dedicated translation machinery responsible for the synthesis of mitochondrial genome-encoded proteins, including at least some of the essential transmembrane subunits of the mitochondrial respiratory chain. The mitoribosomes are attached to the mitochondrial inner membrane and translation products are cotranslationally integrated into the membrane. The sequence is that of Large ribosomal subunit protein uL14m (mrpl38) from Schizosaccharomyces pombe (strain 972 / ATCC 24843) (Fission yeast).